The following is a 100-amino-acid chain: Urease subunit gamma (100 aa).

The protein belongs to the urease gamma subunit family. In terms of assembly, heterotrimer of UreA (gamma), UreB (beta) and UreC (alpha) subunits. Three heterotrimers associate to form the active enzyme.

The protein resides in the cytoplasm. It carries out the reaction urea + 2 H2O + H(+) = hydrogencarbonate + 2 NH4(+). It functions in the pathway nitrogen metabolism; urea degradation; CO(2) and NH(3) from urea (urease route): step 1/1. This is Urease subunit gamma from Prochlorococcus marinus (strain NATL2A).